The primary structure comprises 325 residues: Probable transcription factor At4g01260 (325 aa).

Residues 1-98 (MAPKQLKKIE…SMGEEDVKKK (98 aa)) form a disordered region. Composition is skewed to low complexity over residues 23-32 (ASSGESATSG) and 49-69 (KPVV…ESST). A compositionally biased stretch (basic and acidic residues) spans 73 to 83 (RSFEKTDEMSK).

It belongs to the GeBP family.

This is Probable transcription factor At4g01260 from Arabidopsis thaliana (Mouse-ear cress).